The following is a 256-amino-acid chain: Type II phosphatidylinositol 4,5-bisphosphate 4-phosphatase (256 aa).

The span at 1–10 shows a compositional bias: basic and acidic residues; the sequence is MAADGIDERS. Residues 1–25 form a disordered region; the sequence is MAADGIDERSPLISPSSGNVTPTAP. Over residues 13 to 22 the composition is skewed to polar residues; that stretch reads ISPSSGNVTP. Cys-106 is a catalytic residue. The CX5R motif signature appears at 106 to 112; it reads CKDISRR. 2 helical membrane-spanning segments follow: residues 191–211 and 226–246; these read CCTY…LTVG and WAVA…WGAI.

Its subcellular location is the late endosome membrane. It localises to the lysosome membrane. It catalyses the reaction a 1,2-diacyl-sn-glycero-3-phospho-(1D-myo-inositol-4,5-bisphosphate) + H2O = a 1,2-diacyl-sn-glycero-3-phospho-(1D-myo-inositol-5-phosphate) + phosphate. Its function is as follows. Catalyzes the hydrolysis of phosphatidylinositol-4,5-bisphosphate (PtdIns-4,5-P2) to phosphatidylinositol-4-phosphate (PtdIns-4-P). This chain is Type II phosphatidylinositol 4,5-bisphosphate 4-phosphatase, found in Xenopus laevis (African clawed frog).